The following is a 484-amino-acid chain: Probable chitinase 2 (484 aa).

The N-terminal stretch at 1–33 (MTLRSRLSGEAPQLWLLLLLASTASSLWASVAA) is a signal peptide. In terms of domain architecture, GH18 spans 41–432 (KVVVCYVSTW…RTINEATMLA (392 aa)). A disulfide bond links C45 and C70. Residues 98 to 99 (EE) and 125 to 128 (GGWN) each bind chitin. The active-site Proton donor is E168. Residues Y169, 231–234 (MCYD), and W384 contribute to the chitin site. S467 is subject to Phosphoserine.

This sequence belongs to the glycosyl hydrolase 18 family. Chitinase class II subfamily.

The enzyme catalyses Random endo-hydrolysis of N-acetyl-beta-D-glucosaminide (1-&gt;4)-beta-linkages in chitin and chitodextrins.. In Drosophila melanogaster (Fruit fly), this protein is Probable chitinase 2.